A 117-amino-acid chain; its full sequence is UPF0102 protein YE3728 (117 aa).

It belongs to the UPF0102 family.

This Yersinia enterocolitica serotype O:8 / biotype 1B (strain NCTC 13174 / 8081) protein is UPF0102 protein YE3728.